A 403-amino-acid polypeptide reads, in one-letter code: Coenzyme A biosynthesis bifunctional protein CoaBC (403 aa).

Positions 1 to 197 (MISEIMHPTK…GNNLKKEGNR (197 aa)) are phosphopantothenoylcysteine decarboxylase. The segment at 198–403 (VLILNGGTVE…VEKVKKLVKS (206 aa)) is phosphopantothenate--cysteine ligase. CTP-binding residues include Asp-285, Lys-294, and Phe-327.

This sequence in the N-terminal section; belongs to the HFCD (homo-oligomeric flavin containing Cys decarboxylase) superfamily. In the C-terminal section; belongs to the PPC synthetase family. As to quaternary structure, homododecamer. The CoaC domain is responsible for dodecamer formation. It depends on Mg(2+) as a cofactor. The cofactor is FMN.

It catalyses the reaction N-[(R)-4-phosphopantothenoyl]-L-cysteine + H(+) = (R)-4'-phosphopantetheine + CO2. It carries out the reaction (R)-4'-phosphopantothenate + L-cysteine + CTP = N-[(R)-4-phosphopantothenoyl]-L-cysteine + CMP + diphosphate + H(+). It participates in cofactor biosynthesis; coenzyme A biosynthesis. In terms of biological role, catalyzes two sequential steps in the biosynthesis of coenzyme A. In the first step cysteine is conjugated to 4'-phosphopantothenate to form 4-phosphopantothenoylcysteine. In the second step the latter compound is decarboxylated to form 4'-phosphopantotheine. The sequence is that of Coenzyme A biosynthesis bifunctional protein CoaBC from Methanocaldococcus jannaschii (strain ATCC 43067 / DSM 2661 / JAL-1 / JCM 10045 / NBRC 100440) (Methanococcus jannaschii).